We begin with the raw amino-acid sequence, 180 residues long: Large ribosomal subunit protein uL6 (180 aa).

It belongs to the universal ribosomal protein uL6 family. As to quaternary structure, part of the 50S ribosomal subunit.

Functionally, this protein binds to the 23S rRNA, and is important in its secondary structure. It is located near the subunit interface in the base of the L7/L12 stalk, and near the tRNA binding site of the peptidyltransferase center. The polypeptide is Large ribosomal subunit protein uL6 (Mycoplasma capricolum subsp. capricolum (strain California kid / ATCC 27343 / NCTC 10154)).